Reading from the N-terminus, the 605-residue chain is Elongation factor 4 (605 aa).

The region spanning 8–190 (RRVRNFCIVA…AIITRIPPPQ (183 aa)) is the tr-type G domain. GTP contacts are provided by residues 20-25 (DHGKST) and 137-140 (NKID).

The protein belongs to the TRAFAC class translation factor GTPase superfamily. Classic translation factor GTPase family. LepA subfamily.

Its subcellular location is the cell inner membrane. It carries out the reaction GTP + H2O = GDP + phosphate + H(+). Its function is as follows. Required for accurate and efficient protein synthesis under certain stress conditions. May act as a fidelity factor of the translation reaction, by catalyzing a one-codon backward translocation of tRNAs on improperly translocated ribosomes. Back-translocation proceeds from a post-translocation (POST) complex to a pre-translocation (PRE) complex, thus giving elongation factor G a second chance to translocate the tRNAs correctly. Binds to ribosomes in a GTP-dependent manner. This is Elongation factor 4 from Treponema pallidum (strain Nichols).